Reading from the N-terminus, the 381-residue chain is Subtilisin amylosacchariticus (381 aa).

The N-terminal stretch at 1-29 (MRSKKLWISLLFALTLIFTMAFSNMSAQA) is a signal peptide. The propeptide occupies 30–106 (AGKSSTEKKY…VEEDHIAHEY (77 aa)). In terms of domain architecture, Inhibitor I9 spans 38 to 103 (KYIVGFKQTM…VAYVEEDHIA (66 aa)). A Ca(2+)-binding site is contributed by Q108. One can recognise a Peptidase S8 domain in the interval 111–380 (PYGISQIKAP…KGLINVQAAA (270 aa)). The active-site Charge relay system is the D138. D147 is a binding site for Ca(2+). The Charge relay system role is filled by H170. Residues L181, N183, I185, V187, A275, Y277, and T280 each contribute to the Ca(2+) site. S327 serves as the catalytic Charge relay system.

Belongs to the peptidase S8 family. Ca(2+) serves as cofactor.

The protein localises to the secreted. The catalysed reaction is Hydrolysis of proteins with broad specificity for peptide bonds, and a preference for a large uncharged residue in P1. Hydrolyzes peptide amides.. Functionally, subtilisin is an extracellular alkaline serine protease, it catalyzes the hydrolysis of proteins and peptide amides. This Bacillus subtilis subsp. amylosacchariticus protein is Subtilisin amylosacchariticus (apr).